Reading from the N-terminus, the 357-residue chain is MPYIGSLKVNQFRNLADVDITPHSQFNFFFGQNGAGKTSILESIYYLSVGRSFRTHLPQRLIQDNTDRFLIFITLYNGTQFIPLGVERDCHGDRCLRINGETASSWSLAAKRLPLCSLSAMSHRFLLDGPRVRRQFLDWLMFHVEPSFFSIWQRLQRSLKQRNAALKAKLPLGEITHWDKMLVEDGERLHQLRQNVVTEFKPLFTQMLQQFLPAYPLIGHYFRGWSEKYSLMEQLQINLKQDLQRGYTQAGPQRADFRLTLGDLPAQDILSQGQQKLVTYALHFAQGLLLKEKTGISPIYLIDDLPAELDANKRDCVIDLVNCLESQVFISGIDPNEIRLPPHSTLFHVKHGKVAAL.

31–38 (GQNGAGKT) contacts ATP.

It belongs to the RecF family.

It localises to the cytoplasm. Its function is as follows. The RecF protein is involved in DNA metabolism; it is required for DNA replication and normal SOS inducibility. RecF binds preferentially to single-stranded, linear DNA. It also seems to bind ATP. This is DNA replication and repair protein RecF from Coxiella burnetii (strain RSA 493 / Nine Mile phase I).